The sequence spans 193 residues: uncharacterized protein (193 aa).

The interval 1–144 (MEKKRTLSVN…NNNNNNEGTI (144 aa)) is disordered. The segment covering 29 to 86 (NSLNNIENNECNNNNNNNNNNNNNNSNSNNLNNSNNNNINTSSNSINSSNSINNSIDN) has biased composition (low complexity). Over residues 103–118 (KMNSSQEFQSYLTPNK) the composition is skewed to polar residues. Over residues 119-140 (NNNNRNNNNRNNNNNNNNNNNN) the composition is skewed to low complexity. A helical membrane pass occupies residues 158-180 (YMIRPFLVGASASFGISIGMFYF).

The protein localises to the membrane. This is an uncharacterized protein from Dictyostelium discoideum (Social amoeba).